The primary structure comprises 57 residues: Putative antitoxin VapB4 (57 aa).

Functionally, possibly the antitoxin component of a type II toxin-antitoxin (TA) system. Its cognate toxin is VapC4 (Potential). This chain is Putative antitoxin VapB4 (vapB4), found in Methanocaldococcus jannaschii (strain ATCC 43067 / DSM 2661 / JAL-1 / JCM 10045 / NBRC 100440) (Methanococcus jannaschii).